The primary structure comprises 380 residues: 3-methylitaconate isomerase (380 aa).

The protein belongs to the PrpF family. Homotetramer.

The enzyme catalyses 2-methylene-3-methylsuccinate = dimethylmaleate. It functions in the pathway cofactor degradation; nicotinate degradation; propanoate and pyruvate from 6-hydroxynicotinate: step 6/8. With respect to regulation, inhibited by oxidized glutathione, p-chloromercuriphenylsulfonic acid and iodoacetic acid. Not inhibited by the chelating agent alpha,alpha-dipyridyl. Activity is slightly increased by EDTA. Not activated by Fe(2+), Mg(2+), Mn(2+) or Ca(2+). Unaffected by K(+), Na(+), NH4(+), Rb(+) or Li(+). Its function is as follows. Catalyzes the reversible isomerization of (R)-3-methylitaconate to 2,3-dimethylmaleate. Has very low isomerase activity with itaconate. This Eubacterium barkeri (Clostridium barkeri) protein is 3-methylitaconate isomerase (mii).